A 177-amino-acid polypeptide reads, in one-letter code: Peptide deformylase (177 aa).

2 residues coordinate Fe cation: C98 and H140. The active site involves E141. H144 is a Fe cation binding site.

It belongs to the polypeptide deformylase family. Fe(2+) serves as cofactor.

It carries out the reaction N-terminal N-formyl-L-methionyl-[peptide] + H2O = N-terminal L-methionyl-[peptide] + formate. Removes the formyl group from the N-terminal Met of newly synthesized proteins. Requires at least a dipeptide for an efficient rate of reaction. N-terminal L-methionine is a prerequisite for activity but the enzyme has broad specificity at other positions. The protein is Peptide deformylase of Zymomonas mobilis subsp. mobilis (strain ATCC 31821 / ZM4 / CP4).